Reading from the N-terminus, the 206-residue chain is Ras-related protein Rab-18 (206 aa).

M1 carries the post-translational modification N-acetylmethionine. Residues S17, G20, K21, S22, S23, D34, P35, T40, G66, K123, and D125 each contribute to the GTP site. A Mg(2+)-binding site is contributed by S22. Short sequence motifs (switch) lie at residues 31–45 (DTFDPELAATIGVDF) and 63–80 (DTAGQERFRTLTPSYYRG). T40 lines the Mg(2+) pocket. At S144 the chain carries Phosphoserine. A152 serves as a coordination point for GTP. Residue C199 is the site of S-palmitoyl cysteine attachment. The residue at position 203 (C203) is a Cysteine methyl ester. C203 carries the S-geranylgeranyl cysteine lipid modification. Residues 204–206 (SVL) constitute a propeptide, removed in mature form.

This sequence belongs to the small GTPase superfamily. Rab family. Interacts (in GTP-bound form) with ZFYVE1. Interacts with ZW10 and this interaction is enhanced in the presence of ZFYVE1. Interacts with BSCL2. It depends on Mg(2+) as a cofactor.

It localises to the endoplasmic reticulum membrane. The protein localises to the golgi apparatus. It is found in the cis-Golgi network membrane. The protein resides in the lipid droplet. Its subcellular location is the apical cell membrane. It catalyses the reaction GTP + H2O = GDP + phosphate + H(+). With respect to regulation, regulated by guanine nucleotide exchange factors (GEFs) which promote the exchange of bound GDP for free GTP. Regulated by GTPase activating proteins (GAPs) which increase the GTP hydrolysis activity at the ER membrane. Inhibited by GDP dissociation inhibitors (GDIs) which prevent Rab-GDP dissociation. Functionally, the small GTPases Rab are key regulators of intracellular membrane trafficking, from the formation of transport vesicles to their fusion with membranes. Rabs cycle between an inactive GDP-bound form and an active GTP-bound form that is able to recruit to membranes different sets of downstream effectors directly responsible for vesicle formation, movement, tethering and fusion. RAB18 is required for the localization of ZFYVE1 to lipid droplets and for its function in mediating the formation of endoplasmic reticulum-lipid droplets (ER-LD) contacts. Also required for maintaining endoplasmic reticulum structure. Plays a role in apical endocytosis/recycling. Plays a key role in eye and brain development and neurodegeneration. The chain is Ras-related protein Rab-18 from Rattus norvegicus (Rat).